Here is a 526-residue protein sequence, read N- to C-terminus: Histidine ammonia-lyase (526 aa).

The 5-imidazolinone (Ala-Gly) cross-link spans 143-145; sequence ASG. Ser144 is subject to 2,3-didehydroalanine (Ser).

Belongs to the PAL/histidase family. Post-translationally, contains an active site 4-methylidene-imidazol-5-one (MIO), which is formed autocatalytically by cyclization and dehydration of residues Ala-Ser-Gly.

It is found in the cytoplasm. It carries out the reaction L-histidine = trans-urocanate + NH4(+). Its pathway is amino-acid degradation; L-histidine degradation into L-glutamate; N-formimidoyl-L-glutamate from L-histidine: step 1/3. This Aromatoleum aromaticum (strain DSM 19018 / LMG 30748 / EbN1) (Azoarcus sp. (strain EbN1)) protein is Histidine ammonia-lyase.